The sequence spans 89 residues: UPF0223 protein BCE_4008 (89 aa).

This sequence belongs to the UPF0223 family.

In Bacillus cereus (strain ATCC 10987 / NRS 248), this protein is UPF0223 protein BCE_4008.